We begin with the raw amino-acid sequence, 372 residues long: tRNA-specific 2-thiouridylase MnmA (372 aa).

ATP is bound by residues 11–18 and methionine 37; that span reads GMSGGVDS. The interval 97–99 is interaction with target base in tRNA; that stretch reads NPD. The active-site Nucleophile is the cysteine 102. A disulfide bridge links cysteine 102 with cysteine 199. Glycine 126 lines the ATP pocket. The segment at 149 to 151 is interaction with tRNA; sequence KDQ. Residue cysteine 199 is the Cysteine persulfide intermediate of the active site. Residues 309–310 are interaction with tRNA; that stretch reads RY.

This sequence belongs to the MnmA/TRMU family.

Its subcellular location is the cytoplasm. It catalyses the reaction S-sulfanyl-L-cysteinyl-[protein] + uridine(34) in tRNA + AH2 + ATP = 2-thiouridine(34) in tRNA + L-cysteinyl-[protein] + A + AMP + diphosphate + H(+). Functionally, catalyzes the 2-thiolation of uridine at the wobble position (U34) of tRNA, leading to the formation of s(2)U34. The sequence is that of tRNA-specific 2-thiouridylase MnmA from Staphylococcus aureus (strain Mu50 / ATCC 700699).